The chain runs to 68 residues: Large ribosomal subunit protein bL31 (68 aa).

Residues Cys-16, Cys-18, Cys-37, and Cys-40 each contribute to the Zn(2+) site.

The protein belongs to the bacterial ribosomal protein bL31 family. Type A subfamily. In terms of assembly, part of the 50S ribosomal subunit. It depends on Zn(2+) as a cofactor.

Functionally, binds the 23S rRNA. The protein is Large ribosomal subunit protein bL31 of Nitrosococcus oceani (strain ATCC 19707 / BCRC 17464 / JCM 30415 / NCIMB 11848 / C-107).